The primary structure comprises 278 residues: Dermonecrotic toxin LlSicTox-alphaIII3iii (278 aa).

His-5 is an active-site residue. 2 residues coordinate Mg(2+): Glu-25 and Asp-27. The active-site Nucleophile is the His-40. Cys-44 and Cys-50 are disulfide-bonded. Asp-84 contributes to the Mg(2+) binding site.

It belongs to the arthropod phospholipase D family. Class I subfamily. It depends on Mg(2+) as a cofactor. As to expression, expressed by the venom gland.

It is found in the secreted. The catalysed reaction is an N-(acyl)-sphingosylphosphocholine = an N-(acyl)-sphingosyl-1,3-cyclic phosphate + choline. It catalyses the reaction an N-(acyl)-sphingosylphosphoethanolamine = an N-(acyl)-sphingosyl-1,3-cyclic phosphate + ethanolamine. The enzyme catalyses a 1-acyl-sn-glycero-3-phosphocholine = a 1-acyl-sn-glycero-2,3-cyclic phosphate + choline. It carries out the reaction a 1-acyl-sn-glycero-3-phosphoethanolamine = a 1-acyl-sn-glycero-2,3-cyclic phosphate + ethanolamine. Its function is as follows. Dermonecrotic toxins cleave the phosphodiester linkage between the phosphate and headgroup of certain phospholipids (sphingolipid and lysolipid substrates), forming an alcohol (often choline) and a cyclic phosphate. This toxin acts on sphingomyelin (SM). It may also act on ceramide phosphoethanolamine (CPE), lysophosphatidylcholine (LPC) and lysophosphatidylethanolamine (LPE), but not on lysophosphatidylserine (LPS), and lysophosphatidylglycerol (LPG). It acts by transphosphatidylation, releasing exclusively cyclic phosphate products as second products. Induces dermonecrosis, hemolysis, increased vascular permeability, edema, inflammatory response, and platelet aggregation. This chain is Dermonecrotic toxin LlSicTox-alphaIII3iii, found in Loxosceles laeta (South American recluse spider).